We begin with the raw amino-acid sequence, 639 residues long: Kinesin-like protein KIF22 (639 aa).

Residues 18-345 (RVRVAVRLRP…LNFAAKSKQI (328 aa)) form the Kinesin motor domain. 102 to 109 (GPTGAGKT) contacts ATP. Positions 358–400 (IAALPAMKRPREEAETAAGSRQRKKSKTDSTESSPNTSMDAAS) are disordered. Positions 388–397 (TESSPNTSMD) are enriched in polar residues. The stretch at 439–484 (KRERMALLKKWEESQMEIERLKEKQKELEQKAIEAEARLEKSTNSD) forms a coiled coil. Positions 549–552 (GREN) match the Important for regulated proteolytic degradation motif.

This sequence belongs to the TRAFAC class myosin-kinesin ATPase superfamily. Kinesin family. Post-translationally, ubiquitinated, leading to its subsequent proteasomal degradation.

It localises to the nucleus. The protein resides in the cytoplasm. It is found in the cytoskeleton. Functionally, kinesin family member that is involved in spindle formation and the movements of chromosomes during mitosis and meiosis. Binds to microtubules and to DNA. This is Kinesin-like protein KIF22 (kif22) from Xenopus tropicalis (Western clawed frog).